The following is a 398-amino-acid chain: tRNA-specific 2-thiouridylase MnmA (398 aa).

ATP-binding positions include 20–27 and Leu-46; that span reads AMSGGVDS. Cys-114 acts as the Nucleophile in catalysis. Cys-114 and Cys-210 are disulfide-bonded. ATP is bound at residue Gly-138. Residues 160 to 162 form an interaction with tRNA region; the sequence is RDQ. The Cysteine persulfide intermediate role is filled by Cys-210.

Belongs to the MnmA/TRMU family.

It is found in the cytoplasm. It catalyses the reaction S-sulfanyl-L-cysteinyl-[protein] + uridine(34) in tRNA + AH2 + ATP = 2-thiouridine(34) in tRNA + L-cysteinyl-[protein] + A + AMP + diphosphate + H(+). Catalyzes the 2-thiolation of uridine at the wobble position (U34) of tRNA, leading to the formation of s(2)U34. This is tRNA-specific 2-thiouridylase MnmA from Brucella abortus (strain S19).